Consider the following 701-residue polypeptide: MARKTPINRYRNIGIVAHVDAGKTTTTERVLFYTGLSHKIGEVHDGAATMDWMEQEQERGITITSAATTCFWAGMDKQYDQHRINIIDTPGHVDFTIEVERSLRVLDGAVVVFCGSSGVEPQSETVWRQADKYHVPRVVFVNKMDRAGADFERVVGQIRKRLGATCVPIHLNIGSEENFRGVIDLIKMKAINWNESDQGMTFTYEGIPAELQDRAEALRTELVEAAAEASDELMDKYLEGEELTEEEIKLALRQRTINNEIVLATCGSAFKNKGVQAVLDAVIEFLPAPADVPAITGVLDDKDETEATRPADDEAPFAALAFKIATDPFVGTLTFFRCYSGVVNTGDSVYNPVKAKRERFGRIVQMHAKDREELKEVRAGDIAAAIGLKDVTTGDTLCDPNHIITLERMDFPEPVISIAVEPRSQADQEKMALALGKLAAEDPSFKVNTDEESGQTIISGMGELHLDIIVDRMRREFSVECNVGKPQVAYRETIRGKVDVEGKFVRQSGGRGQFGHVWLTIEPNEEGAGYEFINNIVGGAIPKEFIPSVDKGIHEQMQNGVLAGYPVLDVKVTLFDGSYHDVDSSEMAFKIAGSMGFRKGAAEAKPVLLEPTMKVEVTTPEDWMGDVVGDLNRRRGVIEGMEDGVAGIKIVLAKVPLSEMFGYSTDLRSATQGRASYSMEFFNYSEAPNNVAKAIIDARQS.

A tr-type G domain is found at 8 to 290; sequence NRYRNIGIVA…AVIEFLPAPA (283 aa). GTP is bound by residues 17–24, 88–92, and 142–145; these read AHVDAGKT, DTPGH, and NKMD.

It belongs to the TRAFAC class translation factor GTPase superfamily. Classic translation factor GTPase family. EF-G/EF-2 subfamily.

It localises to the cytoplasm. Its function is as follows. Catalyzes the GTP-dependent ribosomal translocation step during translation elongation. During this step, the ribosome changes from the pre-translocational (PRE) to the post-translocational (POST) state as the newly formed A-site-bound peptidyl-tRNA and P-site-bound deacylated tRNA move to the P and E sites, respectively. Catalyzes the coordinated movement of the two tRNA molecules, the mRNA and conformational changes in the ribosome. The sequence is that of Elongation factor G 2 from Pseudoalteromonas atlantica (strain T6c / ATCC BAA-1087).